We begin with the raw amino-acid sequence, 380 residues long: uncharacterized protein (380 aa).

The 4Fe-4S ferredoxin-type domain occupies 287–318 (LRPKIYQDKCKNCRECLVEKYCPTFAIKRENG).

This is an uncharacterized protein from Methanocaldococcus jannaschii (strain ATCC 43067 / DSM 2661 / JAL-1 / JCM 10045 / NBRC 100440) (Methanococcus jannaschii).